We begin with the raw amino-acid sequence, 210 residues long: MNILLSSTLFVLLMFQIIGSGMGCDMKVRGLDANMKKMILDLHNKKRQIVANGQQSGQPLAANMKELHWDDEIEAIAQRSAETCVFKHTAKSLRKSSKYSYLGENVYKGGYPDPIPRSVNKWYDEVKDVTPAVVKSFSDDGPMIGHYTQMVWANTEALGCGLVTASDGTSYLFCQYGPGGNYPGQQIYKQGPPGSGCKNGKSSKYPGLCN.

A signal peptide spans 1-23 (MNILLSSTLFVLLMFQIIGSGMG).

Contains 3 disulfide bonds. As to expression, expressed by the venom gland.

It localises to the secreted. The chain is Scoloptoxin SSD552 from Scolopendra dehaani (Thai centipede).